Here is a 127-residue protein sequence, read N- to C-terminus: Large ribosomal subunit protein bL19 (127 aa).

Belongs to the bacterial ribosomal protein bL19 family.

In terms of biological role, this protein is located at the 30S-50S ribosomal subunit interface and may play a role in the structure and function of the aminoacyl-tRNA binding site. The sequence is that of Large ribosomal subunit protein bL19 from Cupriavidus pinatubonensis (strain JMP 134 / LMG 1197) (Cupriavidus necator (strain JMP 134)).